The chain runs to 337 residues: Glucan endo-1,3-beta-glucosidase, basic isoform 1 (337 aa).

The active-site Proton donor is Glu-94. Glu-239 functions as the Nucleophile in the catalytic mechanism. Positions 315–337 (VSERVWDISAETNSTASSLISEM) are cleaved as a propeptide — removed in mature form. Asn-327 carries N-linked (GlcNAc...) asparagine glycosylation.

This sequence belongs to the glycosyl hydrolase 17 family.

It is found in the vacuole. The enzyme catalyses Hydrolysis of (1-&gt;3)-beta-D-glucosidic linkages in (1-&gt;3)-beta-D-glucans.. Is thought to be an important plant defense-related product against fungal pathogens. This Solanum tuberosum (Potato) protein is Glucan endo-1,3-beta-glucosidase, basic isoform 1 (GLUB1).